We begin with the raw amino-acid sequence, 121 residues long: Large ribosomal subunit protein bL12 (121 aa).

This sequence belongs to the bacterial ribosomal protein bL12 family. In terms of assembly, homodimer. Part of the ribosomal stalk of the 50S ribosomal subunit. Forms a multimeric L10(L12)X complex, where L10 forms an elongated spine to which 2 to 4 L12 dimers bind in a sequential fashion. Binds GTP-bound translation factors.

Functionally, forms part of the ribosomal stalk which helps the ribosome interact with GTP-bound translation factors. Is thus essential for accurate translation. The polypeptide is Large ribosomal subunit protein bL12 (Leuconostoc mesenteroides subsp. mesenteroides (strain ATCC 8293 / DSM 20343 / BCRC 11652 / CCM 1803 / JCM 6124 / NCDO 523 / NBRC 100496 / NCIMB 8023 / NCTC 12954 / NRRL B-1118 / 37Y)).